A 204-amino-acid polypeptide reads, in one-letter code: N-(5'-phosphoribosyl)anthranilate isomerase (204 aa).

This sequence belongs to the TrpF family.

The catalysed reaction is N-(5-phospho-beta-D-ribosyl)anthranilate = 1-(2-carboxyphenylamino)-1-deoxy-D-ribulose 5-phosphate. The protein operates within amino-acid biosynthesis; L-tryptophan biosynthesis; L-tryptophan from chorismate: step 3/5. The polypeptide is N-(5'-phosphoribosyl)anthranilate isomerase (Desulforudis audaxviator (strain MP104C)).